The primary structure comprises 127 residues: Large-conductance mechanosensitive channel (127 aa).

The next 3 membrane-spanning stretches (helical) occupy residues 9 to 29, 32 to 52, and 75 to 95; these read EFAM…GVAF, IVTA…LGGI, and VIDF…INLL.

The protein belongs to the MscL family. In terms of assembly, homopentamer.

The protein resides in the cell inner membrane. In terms of biological role, channel that opens in response to stretch forces in the membrane lipid bilayer. May participate in the regulation of osmotic pressure changes within the cell. This is Large-conductance mechanosensitive channel from Legionella pneumophila (strain Paris).